The sequence spans 476 residues: NADH-quinone oxidoreductase subunit N (476 aa).

The next 13 membrane-spanning stretches (helical) occupy residues 7–27, 33–53, 59–79, 100–120, 122–142, 156–176, 199–219, 237–257, 265–285, 305–325, 363–383, 399–419, and 437–457; these read LTVEILTAALGLGLLALGLLV, RGIAYVATAGLAGILAAAFGM, VVLGGYVIDPFGTYFKILFLV, GEYYALLVLATLGMMVLASSG, LVSLYLGLELMTITFCILAAF, YVLLGAMSSAIFLYGLSLVYG, LLLGTIFILAGFAFKVTAVPF, FLSVASKAAAFAALVRVFFGA, WVQLFIALAVLTIVLGNLVAI, LLLGIVSFSVLGVGAVMYYAM, VAALMLFSLLSLAGIPPMAGF, IWLAILGILMSMVSVYYYLLV, and VAPGLQVAMVVSLLILFILGI.

It belongs to the complex I subunit 2 family. As to quaternary structure, NDH-1 is composed of 14 different subunits. Subunits NuoA, H, J, K, L, M, N constitute the membrane sector of the complex.

The protein localises to the cell membrane. The catalysed reaction is a quinone + NADH + 5 H(+)(in) = a quinol + NAD(+) + 4 H(+)(out). Its function is as follows. NDH-1 shuttles electrons from NADH, via FMN and iron-sulfur (Fe-S) centers, to quinones in the respiratory chain. The immediate electron acceptor for the enzyme in this species is believed to be a menaquinone. Couples the redox reaction to proton translocation (for every two electrons transferred, four hydrogen ions are translocated across the cytoplasmic membrane), and thus conserves the redox energy in a proton gradient. The chain is NADH-quinone oxidoreductase subunit N from Moorella thermoacetica (strain ATCC 39073 / JCM 9320).